An 845-amino-acid polypeptide reads, in one-letter code: MTPPSSSSHFPSPSSANNDFHSLSLEAHGSLSDKFISQFRLNYTIIPIAQKSNISLPFLTLSPCSFTICSLRARLHSLHGPSTVFLKRETSQISARVNDENGFTASPSFFSVDCFDELFPTLSTTDEQPKEPSIISISSSSSDPSSSPPPSSSLLKTPDNDFCARPETFVKSDTADIKLQIHQNNLVLTFLDTTTVSKVNIVLEIHIPVLRDFVTFEQYIPLMFLPSPFETILSFDNLKSDSPSSDLHLGWDHTVSKESMSQSIAEVLNPYNKGVSRSLNDATNMETYHWSPFPPQFSTFNDNALRLRIYYKPKSWLPKNSSCSLSVDVKATLLETTPPSCEVSYNLLLTCRSSNRFRLFPASTPNSNGLCRNDSKCRFLMILPETIIKSPSSFIGDSYNIANIDPPSSMNVQSSEFRVGEVQSFTTNTSSFAFTFKEIVQLGSKASVPMILFPAPSNYKLTIEKPPFPCDLTIPHTAINDSWLPMKLKETNAISYYRKTCSSCKYPFQFFINKLPFYQSPSLPLSATYVWIASALLSVQPGNGSFNIMLSLKFVSSMKPGTELLTIKQPKSSLLNWGLVNGYPKTEGRIVLLPRNDIVLIQADQPTSVFDLCWTIKPTYEKSSNFSCLQLPIPVLNTPILTPVTINIQSTTYYLIGYANQNSKKTLDQPTSLLVLGCKAKNVSELILSYLPEKPIPDGAPIVTNVVETNKTNEAPSSFRKCLQQFLVFLTFTGMTLFILYQLTFPYGVAKDNSSFIDTPLPHSCEMEKSLNVLQHKVLQLQAVNMKLHDYYEKEPTEIYKTVSVTSTQIMPAVTKMSSFELEREQFHKAFGFLRLNRKKDDNAN.

Residues 122–158 (LSTTDEQPKEPSIISISSSSSDPSSSPPPSSSLLKTP) form a disordered region. Low complexity predominate over residues 132–145 (PSIISISSSSSDPS). Residues 726–746 (FLVFLTFTGMTLFILYQLTFP) traverse the membrane as a helical segment.

It is found in the membrane. Has a role in meiosis. The polypeptide is Meiotically up-regulated gene 4 protein (mug4) (Schizosaccharomyces pombe (strain 972 / ATCC 24843) (Fission yeast)).